Consider the following 507-residue polypeptide: Alkyl hydroperoxide reductase subunit F (507 aa).

207–222 (DVLIVGGGPASGSAAI) is an FAD binding site. The cysteines at positions 335 and 338 are disulfide-linked. 347–361 (DVAVIGGGNSGVEAA) provides a ligand contact to NAD(+). Position 467–477 (467–477 (TNVPGIFAAGD)) interacts with FAD.

This sequence belongs to the class-II pyridine nucleotide-disulfide oxidoreductase family. In terms of assembly, homodimer. The cofactor is FAD.

Its function is as follows. Serves to protect the cell against DNA damage by alkyl hydroperoxides. It can use either NADH or NADPH as electron donor for direct reduction of redox dyes or of alkyl hydroperoxides when combined with the AhpC protein. The polypeptide is Alkyl hydroperoxide reductase subunit F (ahpF) (Staphylococcus epidermidis (strain ATCC 35984 / DSM 28319 / BCRC 17069 / CCUG 31568 / BM 3577 / RP62A)).